Consider the following 164-residue polypeptide: UPF0305 protein MJ0646 (164 aa).

It belongs to the UPF0305 family.

This chain is UPF0305 protein MJ0646, found in Methanocaldococcus jannaschii (strain ATCC 43067 / DSM 2661 / JAL-1 / JCM 10045 / NBRC 100440) (Methanococcus jannaschii).